Reading from the N-terminus, the 202-residue chain is Translation initiation factor IF-3 (202 aa).

Positions 178-202 (TPRKTPLLKKESETTEPKKALRSIN) are disordered. Over residues 185–196 (LKKESETTEPKK) the composition is skewed to basic and acidic residues.

It belongs to the IF-3 family. Monomer.

It localises to the cytoplasm. Its function is as follows. IF-3 binds to the 30S ribosomal subunit and shifts the equilibrium between 70S ribosomes and their 50S and 30S subunits in favor of the free subunits, thus enhancing the availability of 30S subunits on which protein synthesis initiation begins. The chain is Translation initiation factor IF-3 from Prochlorococcus marinus (strain NATL1A).